The primary structure comprises 186 residues: Holliday junction branch migration complex subunit RuvA (186 aa).

The tract at residues 1–61 is domain I; sequence MYRYIKGIVT…EDIFQLYGFK (61 aa). A domain II region spans residues 62 to 134; that stretch reads DEETLNLFLK…LKGKLVNDEL (73 aa). Residues 134 to 137 form a flexible linker region; the sequence is LDMQ. The segment at 138–186 is domain III; it reads LLSDNSKDVAAALEALGYNKKEIAKSLKHVNFDQDLNKALKEALAILLK.

The protein belongs to the RuvA family. Homotetramer. Forms an RuvA(8)-RuvB(12)-Holliday junction (HJ) complex. HJ DNA is sandwiched between 2 RuvA tetramers; dsDNA enters through RuvA and exits via RuvB. An RuvB hexamer assembles on each DNA strand where it exits the tetramer. Each RuvB hexamer is contacted by two RuvA subunits (via domain III) on 2 adjacent RuvB subunits; this complex drives branch migration. In the full resolvosome a probable DNA-RuvA(4)-RuvB(12)-RuvC(2) complex forms which resolves the HJ.

The protein localises to the cytoplasm. Functionally, the RuvA-RuvB-RuvC complex processes Holliday junction (HJ) DNA during genetic recombination and DNA repair, while the RuvA-RuvB complex plays an important role in the rescue of blocked DNA replication forks via replication fork reversal (RFR). RuvA specifically binds to HJ cruciform DNA, conferring on it an open structure. The RuvB hexamer acts as an ATP-dependent pump, pulling dsDNA into and through the RuvAB complex. HJ branch migration allows RuvC to scan DNA until it finds its consensus sequence, where it cleaves and resolves the cruciform DNA. This chain is Holliday junction branch migration complex subunit RuvA, found in Acholeplasma laidlawii (strain PG-8A).